The primary structure comprises 205 residues: Holliday junction branch migration complex subunit RuvA (205 aa).

The segment at 1–64 is domain I; the sequence is MIGKLRGLID…EDQIKLFGFR (64 aa). Positions 65–143 are domain II; that stretch reads SDVEREWFRL…AFANVDPGVV (79 aa). The flexible linker stretch occupies residues 144-154; the sequence is RLSGAIEESRA. The interval 154–205 is domain III; that stretch reads APQPVADAISALINLGYGQPQAAAAIAAASRAAGDKAETAQLIRLGLKELAK.

Belongs to the RuvA family. Homotetramer. Forms an RuvA(8)-RuvB(12)-Holliday junction (HJ) complex. HJ DNA is sandwiched between 2 RuvA tetramers; dsDNA enters through RuvA and exits via RuvB. An RuvB hexamer assembles on each DNA strand where it exits the tetramer. Each RuvB hexamer is contacted by two RuvA subunits (via domain III) on 2 adjacent RuvB subunits; this complex drives branch migration. In the full resolvosome a probable DNA-RuvA(4)-RuvB(12)-RuvC(2) complex forms which resolves the HJ.

The protein resides in the cytoplasm. Its function is as follows. The RuvA-RuvB-RuvC complex processes Holliday junction (HJ) DNA during genetic recombination and DNA repair, while the RuvA-RuvB complex plays an important role in the rescue of blocked DNA replication forks via replication fork reversal (RFR). RuvA specifically binds to HJ cruciform DNA, conferring on it an open structure. The RuvB hexamer acts as an ATP-dependent pump, pulling dsDNA into and through the RuvAB complex. HJ branch migration allows RuvC to scan DNA until it finds its consensus sequence, where it cleaves and resolves the cruciform DNA. The polypeptide is Holliday junction branch migration complex subunit RuvA (Bradyrhizobium sp. (strain ORS 278)).